The sequence spans 300 residues: Sulfate adenylyltransferase subunit 2 (300 aa).

Positions arginine 281–phenylalanine 300 are disordered.

It belongs to the PAPS reductase family. CysD subfamily. As to quaternary structure, heterodimer composed of CysD, the smaller subunit, and CysN.

It catalyses the reaction sulfate + ATP + H(+) = adenosine 5'-phosphosulfate + diphosphate. Its pathway is sulfur metabolism; hydrogen sulfide biosynthesis; sulfite from sulfate: step 1/3. Its function is as follows. With CysN forms the ATP sulfurylase (ATPS) that catalyzes the adenylation of sulfate producing adenosine 5'-phosphosulfate (APS) and diphosphate, the first enzymatic step in sulfur assimilation pathway. APS synthesis involves the formation of a high-energy phosphoric-sulfuric acid anhydride bond driven by GTP hydrolysis by CysN coupled to ATP hydrolysis by CysD. This Brucella canis (strain ATCC 23365 / NCTC 10854 / RM-666) protein is Sulfate adenylyltransferase subunit 2.